The chain runs to 43 residues: Protein PsbN (43 aa).

Residues 5–27 (NLVTISISCLLVSLTGYAIYTSF) traverse the membrane as a helical segment.

Belongs to the PsbN family.

It localises to the plastid. The protein localises to the chloroplast thylakoid membrane. May play a role in photosystem I and II biogenesis. This chain is Protein PsbN, found in Gnetum gnemon (Spanish joint-fir).